A 246-amino-acid polypeptide reads, in one-letter code: Small ribosomal subunit protein uS2 (246 aa).

It belongs to the universal ribosomal protein uS2 family.

The protein is Small ribosomal subunit protein uS2 of Burkholderia pseudomallei (strain 668).